Reading from the N-terminus, the 610-residue chain is DNA mismatch repair protein MutL (610 aa).

The protein belongs to the DNA mismatch repair MutL/HexB family.

Functionally, this protein is involved in the repair of mismatches in DNA. It is required for dam-dependent methyl-directed DNA mismatch repair. May act as a 'molecular matchmaker', a protein that promotes the formation of a stable complex between two or more DNA-binding proteins in an ATP-dependent manner without itself being part of a final effector complex. The protein is DNA mismatch repair protein MutL of Rickettsia peacockii (strain Rustic).